A 293-amino-acid polypeptide reads, in one-letter code: Diaminopimelate epimerase (293 aa).

Substrate contacts are provided by asparagine 11 and asparagine 78. Catalysis depends on cysteine 87, which acts as the Proton donor. Substrate-binding positions include 88–89 (GN), asparagine 166, asparagine 202, and 220–221 (ER). Cysteine 229 serves as the catalytic Proton acceptor. 230–231 (GT) is a binding site for substrate.

This sequence belongs to the diaminopimelate epimerase family. In terms of assembly, homodimer.

The protein localises to the cytoplasm. It catalyses the reaction (2S,6S)-2,6-diaminopimelate = meso-2,6-diaminopimelate. The protein operates within amino-acid biosynthesis; L-lysine biosynthesis via DAP pathway; DL-2,6-diaminopimelate from LL-2,6-diaminopimelate: step 1/1. Catalyzes the stereoinversion of LL-2,6-diaminopimelate (L,L-DAP) to meso-diaminopimelate (meso-DAP), a precursor of L-lysine and an essential component of the bacterial peptidoglycan. This Mycobacterium sp. (strain JLS) protein is Diaminopimelate epimerase.